Here is a 353-residue protein sequence, read N- to C-terminus: 3-deoxy-D-manno-octulosonic acid transferase (353 aa).

The Proton acceptor role is filled by glutamate 31. Residues 211-212 (PR), 247-249 (FGI), and 273-276 (NLLE) each bind CMP.

This sequence belongs to the glycosyltransferase group 1 family. Glycosyltransferase 30 subfamily. Can form homodimer, homotrimer and homotetramer.

It is found in the cell inner membrane. It carries out the reaction lipid IVA (E. coli) + CMP-3-deoxy-beta-D-manno-octulosonate = alpha-Kdo-(2-&gt;6)-lipid IVA (E. coli) + CMP + H(+). It functions in the pathway bacterial outer membrane biogenesis; LPS core biosynthesis. In terms of biological role, involved in lipopolysaccharide (LPS) biosynthesis. Catalyzes the transfer of a single 3-deoxy-D-manno-octulosonate (Kdo) residue from CMP-Kdo to lipid IV(A), the tetraacyldisaccharide-1,4'-bisphosphate precursor of lipid A. Is strictly monofunctional, i.e. is capable of adding only a single Kdo residue to the acceptor lipid. This chain is 3-deoxy-D-manno-octulosonic acid transferase (kdtA), found in Aquifex aeolicus (strain VF5).